A 369-amino-acid polypeptide reads, in one-letter code: tRNA-specific 2-thiouridylase MnmA (369 aa).

ATP is bound by residues 12–19 and Met38; that span reads GMSGGVDS. An interaction with target base in tRNA region spans residues 98–100; that stretch reads NPD. The active-site Nucleophile is Cys103. The cysteines at positions 103 and 200 are disulfide-linked. Gly128 provides a ligand contact to ATP. An interaction with tRNA region spans residues 150-152; it reads KDQ. Residue Cys200 is the Cysteine persulfide intermediate of the active site. An interaction with tRNA region spans residues 312-313; it reads RY.

The protein belongs to the MnmA/TRMU family. In terms of assembly, interacts with TusE.

The protein localises to the cytoplasm. The catalysed reaction is S-sulfanyl-L-cysteinyl-[protein] + uridine(34) in tRNA + AH2 + ATP = 2-thiouridine(34) in tRNA + L-cysteinyl-[protein] + A + AMP + diphosphate + H(+). Catalyzes the 2-thiolation of uridine at the wobble position (U34) of tRNA(Lys), tRNA(Glu) and tRNA(Gln), leading to the formation of s(2)U34, the first step of tRNA-mnm(5)s(2)U34 synthesis. Sulfur is provided by IscS, via a sulfur-relay system. Binds ATP and its substrate tRNAs. The chain is tRNA-specific 2-thiouridylase MnmA from Sodalis glossinidius (strain morsitans).